The following is a 288-amino-acid chain: Syntaxin-1A (288 aa).

Basic and acidic residues predominate over residues 1–13 (MKDRTQELRTAKD). Residues 1-20 (MKDRTQELRTAKDSDDDDDV) are disordered. Over 1–265 (MKDRTQELRT…KYQSKARRKK (265 aa)) the chain is Cytoplasmic. Ser14, Ser64, and Ser95 each carry phosphoserine. Residues 68 to 109 (DEKTKEELEELMSDIKKTANKVRSKLKSIEQSIEQEEGLNRS) are a coiled coil. Ser188 is subject to Phosphoserine; by DAPK1. Residues 192–254 (LSEIETRHSE…ERAVSDTKKA (63 aa)) form the t-SNARE coiled-coil homology domain. Glycyl lysine isopeptide (Lys-Gly) (interchain with G-Cter in SUMO) cross-links involve residues Lys252, Lys253, and Lys256. The chain crosses the membrane as a helical; Anchor for type IV membrane protein span at residues 266–286 (IMIIICCVILGIIIASTIGGI). Over 287-288 (FG) the chain is Extracellular.

It belongs to the syntaxin family. In terms of assembly, part of the SNARE core complex containing SNAP25, VAMP2 and STX1A; this complex constitutes the basic catalytic machinery of the complex neurotransmitter release apparatus. The SNARE complex interacts with CPLX1. Interacts with STXBP1. The interaction with STXBP1 promotes assembly of the SNARE complex. Interacts (via C-terminus) with KCNB1 (via C-terminus); the interaction increases in a calcium-dependent manner and induces a pore-independent enhancement of exocytosis in neuroendocrine cells, chromaffin cells, pancreatic beta cells and from the soma of dorsal root ganglia (DRG) neurons. Interacts with SYTL4. Interacts with STXBP6. Interacts with PLCL1 (via C2 domain). Interacts with OTOF. Interacts with LGI3. Interacts (via the H3 domain) with SLC6A4 (via the N-terminus); this interaction regulates SLC4A6 channel conductance in thalamocortical neurons. Interacts with SYT6 and SYT8; the interaction is Ca(2+)-dependent. Interacts with VAMP8. Interacts with SNAP23. Interacts with VAPA and SYBU. Interacts with PRRT2. Interacts with SEPT8. Interacts with STXBP5L. Interacts with synaptotagmin-1/SYT1. Interacts with SEPTIN5; in the cerebellar cortex. Interacts with SEPTIN4; in the striatum. In terms of processing, phosphorylated by CK2. Phosphorylation at Ser-188 by DAPK1 significantly decreases its interaction with STXBP1. Post-translationally, phosphorylated by CK2. Phosphorylation at Ser-188 by DAPK1 significantly decreases its interaction with STXBP1. Sumoylated, sumoylation is required for regulation of synaptic vesicle endocytosis. As to expression, expressed in the striatum (at protein level). Expressed in the ileum.

It localises to the cytoplasmic vesicle. Its subcellular location is the secretory vesicle. The protein localises to the synaptic vesicle membrane. The protein resides in the synapse. It is found in the synaptosome. It localises to the cell membrane. Plays an essential role in hormone and neurotransmitter calcium-dependent exocytosis and endocytosis. Part of the SNARE (Soluble NSF Attachment Receptor) complex composed of SNAP25, STX1A and VAMP2 which mediates the fusion of synaptic vesicles with the presynaptic plasma membrane. STX1A and SNAP25 are localized on the plasma membrane while VAMP2 resides in synaptic vesicles. The pairing of the three SNAREs from the N-terminal SNARE motifs to the C-terminal anchors leads to the formation of the SNARE complex, which brings membranes into close proximity and results in final fusion. Participates in the calcium-dependent regulation of acrosomal exocytosis in sperm. Also plays an important role in the exocytosis of hormones such as insulin or glucagon-like peptide 1 (GLP-1). The polypeptide is Syntaxin-1A (Stx1a) (Mus musculus (Mouse)).